The primary structure comprises 152 residues: Snaclec 5 (152 aa).

A signal peptide spans 1–23 (MGRFIFLSSGLLVVFLSLSGTGA). Disulfide bonds link cysteine 27–cysteine 38, cysteine 55–cysteine 148, and cysteine 123–cysteine 140. A C-type lectin domain is found at 34–149 (YGQHCYRAFK…CASHNPFVCK (116 aa)).

This sequence belongs to the snaclec family. As to quaternary structure, heterodimer; disulfide-linked. In terms of tissue distribution, expressed by the venom gland.

It localises to the secreted. In terms of biological role, interferes with one step of hemostasis (modulation of platelet aggregation, or coagulation cascade, for example). The sequence is that of Snaclec 5 from Bitis arietans (African puff adder).